The primary structure comprises 122 residues: UPF0102 protein VCM66_0538 (122 aa).

The protein belongs to the UPF0102 family.

The sequence is that of UPF0102 protein VCM66_0538 from Vibrio cholerae serotype O1 (strain M66-2).